We begin with the raw amino-acid sequence, 430 residues long: Na(+)/H(+) antiporter NhaA 2 (430 aa).

The next 10 helical transmembrane spans lie at 11–31 (FVHG…IAFI), 60–80 (LSLE…LVGL), 97–117 (VALA…LYTA), 127–147 (GWGV…ALLG), 181–201 (LNLT…YAGW), 215–235 (VLLW…GVLL), 288–308 (HALH…TNAG), 309–329 (VPVA…GLLL), 356–376 (WGHM…SLFV), and 393–413 (GVLL…LLGI).

This sequence belongs to the NhaA Na(+)/H(+) (TC 2.A.33) antiporter family.

The protein resides in the cell membrane. The catalysed reaction is Na(+)(in) + 2 H(+)(out) = Na(+)(out) + 2 H(+)(in). In terms of biological role, na(+)/H(+) antiporter that extrudes sodium in exchange for external protons. In Deinococcus geothermalis (strain DSM 11300 / CIP 105573 / AG-3a), this protein is Na(+)/H(+) antiporter NhaA 2.